The sequence spans 409 residues: Sprouty-related, EVH1 domain-containing protein 2 (409 aa).

A WH1 domain is found at 5–121 (APPEDDSYIV…RGVRKAIEDL (117 aa)). The interval 121–170 (LTEGSTTSSSTIHNEAELGDDDVFATSTDSSSNSSQKREPPVRTIASPLP) is disordered. A compositionally biased stretch (polar residues) spans 123-133 (EGSTTSSSTIH). A compositionally biased stretch (low complexity) spans 146–155 (TSTDSSSNSS). Residues 199–253 (PHRHVSFPDDDDEIVRINPRERNWLTGYEDYRQAPIHRKYPDTESIDSYVRFAKS) form the KBD domain. One can recognise an SPR domain in the interval 299-407 (RCIYCRDMFN…CGCCGGKHKA (109 aa)).

The protein localises to the cell membrane. It localises to the cytoplasmic vesicle. It is found in the secretory vesicle membrane. Its subcellular location is the cytoplasm. Its function is as follows. Negatively regulates Ras signaling pathways and downstream activation of MAP kinases. The sequence is that of Sprouty-related, EVH1 domain-containing protein 2 (spred2) from Xenopus tropicalis (Western clawed frog).